Consider the following 285-residue polypeptide: Protease HtpX homolog (285 aa).

2 helical membrane passes run 7 to 27 (TAML…MIGG) and 30 to 50 (GMTI…WFSD). His131 is a binding site for Zn(2+). Glu132 is an active-site residue. His135 contacts Zn(2+). 2 consecutive transmembrane segments (helical) span residues 146-166 (ITAT…FFGG) and 177-197 (IAGI…QMAI). Glu202 contacts Zn(2+).

The protein belongs to the peptidase M48B family. Zn(2+) is required as a cofactor.

It localises to the cell inner membrane. The polypeptide is Protease HtpX homolog (Burkholderia cenocepacia (strain ATCC BAA-245 / DSM 16553 / LMG 16656 / NCTC 13227 / J2315 / CF5610) (Burkholderia cepacia (strain J2315))).